We begin with the raw amino-acid sequence, 95 residues long: Cobalt transport protein CbiN (95 aa).

2 helical membrane-spanning segments follow: residues His-5 to Gly-25 and Leu-67 to Tyr-87.

Belongs to the CbiN family. In terms of assembly, forms an energy-coupling factor (ECF) transporter complex composed of an ATP-binding protein (A component, CbiO), a transmembrane protein (T component, CbiQ) and 2 possible substrate-capture proteins (S components, CbiM and CbiN) of unknown stoichimetry.

The protein resides in the cell membrane. Its pathway is cofactor biosynthesis; adenosylcobalamin biosynthesis. Functionally, part of the energy-coupling factor (ECF) transporter complex CbiMNOQ involved in cobalt import. This Methanocaldococcus jannaschii (strain ATCC 43067 / DSM 2661 / JAL-1 / JCM 10045 / NBRC 100440) (Methanococcus jannaschii) protein is Cobalt transport protein CbiN.